Consider the following 951-residue polypeptide: Valine--tRNA ligase (951 aa).

The 'HIGH' region motif lies at 42-52; it reads PNVTGSLHMGH. The short motif at 554-558 is the 'KMSKS' region element; it reads KMSKS. Lys-557 is an ATP binding site. The stretch at 880 to 914 forms a coiled coil; that stretch reads AGLIDKAAELDRLAKEVAKLEAEIGRIESKLSNEG.

This sequence belongs to the class-I aminoacyl-tRNA synthetase family. ValS type 1 subfamily. As to quaternary structure, monomer.

It is found in the cytoplasm. The catalysed reaction is tRNA(Val) + L-valine + ATP = L-valyl-tRNA(Val) + AMP + diphosphate. Catalyzes the attachment of valine to tRNA(Val). As ValRS can inadvertently accommodate and process structurally similar amino acids such as threonine, to avoid such errors, it has a 'posttransfer' editing activity that hydrolyzes mischarged Thr-tRNA(Val) in a tRNA-dependent manner. This chain is Valine--tRNA ligase, found in Pectobacterium atrosepticum (strain SCRI 1043 / ATCC BAA-672) (Erwinia carotovora subsp. atroseptica).